The primary structure comprises 461 residues: tRNA modification GTPase MnmE (461 aa).

(6S)-5-formyl-5,6,7,8-tetrahydrofolate contacts are provided by Arg-22, Glu-87, and Arg-126. One can recognise a TrmE-type G domain in the interval Gly-222–Val-382. Position 232 (Asn-232) interacts with K(+). GTP contacts are provided by residues Asn-232 to Ser-237, Thr-251 to Thr-257, and Asp-276 to Gly-279. Ser-236 lines the Mg(2+) pocket. K(+) is bound by residues Thr-251, Ile-253, and Thr-256. Thr-257 is a Mg(2+) binding site. Position 461 (Lys-461) interacts with (6S)-5-formyl-5,6,7,8-tetrahydrofolate.

The protein belongs to the TRAFAC class TrmE-Era-EngA-EngB-Septin-like GTPase superfamily. TrmE GTPase family. In terms of assembly, homodimer. Heterotetramer of two MnmE and two MnmG subunits. Requires K(+) as cofactor.

It is found in the cytoplasm. Its function is as follows. Exhibits a very high intrinsic GTPase hydrolysis rate. Involved in the addition of a carboxymethylaminomethyl (cmnm) group at the wobble position (U34) of certain tRNAs, forming tRNA-cmnm(5)s(2)U34. This is tRNA modification GTPase MnmE from Desulforamulus reducens (strain ATCC BAA-1160 / DSM 100696 / MI-1) (Desulfotomaculum reducens).